The following is a 541-amino-acid chain: Chaperonin GroEL, cyanelle (541 aa).

ATP contacts are provided by residues 29 to 32 (TLGP), 86 to 90 (DGTTT), Gly-413, 479 to 481 (NAA), and Asp-495.

Belongs to the chaperonin (HSP60) family. As to quaternary structure, forms a cylinder of 14 subunits composed of two heptameric rings stacked back-to-back. Interacts with the co-chaperonin GroES.

The protein localises to the plastid. It is found in the cyanelle. The enzyme catalyses ATP + H2O + a folded polypeptide = ADP + phosphate + an unfolded polypeptide.. Its function is as follows. Together with its co-chaperonin GroES, plays an essential role in assisting protein folding. The GroEL-GroES system forms a nano-cage that allows encapsulation of the non-native substrate proteins and provides a physical environment optimized to promote and accelerate protein folding. This chain is Chaperonin GroEL, cyanelle, found in Cyanophora paradoxa.